The sequence spans 755 residues: Kelch-like protein 5 (755 aa).

The disordered stretch occupies residues L152–S184. Positions D158 to S168 are enriched in acidic residues. Over residues D169 to S184 the composition is skewed to low complexity. Residues C220 to E287 enclose the BTB domain. Kelch repeat units follow at residues T468 to D514, K515 to G561, M563 to G608, K609 to G655, L657 to D708, and K709 to K754.

As to expression, expressed in adrenal gland, ovary and thyroid gland and less abundantly in lymph node, prostate, spinal cord, testis and trachea.

The protein resides in the cytoplasm. It localises to the cytoskeleton. This chain is Kelch-like protein 5 (KLHL5), found in Homo sapiens (Human).